The following is a 307-amino-acid chain: DDRGK domain-containing protein 1 (307 aa).

At 1–2 (MD) the chain is on the lumenal side. The helical transmembrane segment at 3-23 (LILLVGIAVALLVILATLYFL) threads the bilayer. Topologically, residues 24-307 (QNKNKAAGEA…PVQSAAGGDS (284 aa)) are cytoplasmic. Composition is skewed to low complexity over residues 32–43 (EAKPAAAAPRRG) and 54–83 (RRAQ…PAAA). The segment at 32-162 (EAKPAAAAPR…EEVEAEAERK (131 aa)) is disordered. The segment covering 117-162 (KMEAKEQKRLQREHELQEREKRKVKEAKEDAERKQQEEVEAEAERK) has biased composition (basic and acidic residues).

This sequence belongs to the DDRGK1 family. As to quaternary structure, interacts with Atg9; the interaction is transient.

It localises to the endoplasmic reticulum membrane. Its function is as follows. Substrate adapter for ufmylation, the covalent attachment of the ubiquitin-like modifier UFM1 to substrate proteins. Required for ufmylation of Atg9; protects the nervous system during aging, possibly by stabilizing Atg9 and supporting its function. The polypeptide is DDRGK domain-containing protein 1 (Drosophila willistoni (Fruit fly)).